A 153-amino-acid polypeptide reads, in one-letter code: NAD(P)H-quinone oxidoreductase subunit N (153 aa).

This sequence belongs to the complex I NdhN subunit family. NDH-1 can be composed of about 15 different subunits; different subcomplexes with different compositions have been identified which probably have different functions.

The protein resides in the cellular thylakoid membrane. The enzyme catalyses a plastoquinone + NADH + (n+1) H(+)(in) = a plastoquinol + NAD(+) + n H(+)(out). The catalysed reaction is a plastoquinone + NADPH + (n+1) H(+)(in) = a plastoquinol + NADP(+) + n H(+)(out). Its function is as follows. NDH-1 shuttles electrons from an unknown electron donor, via FMN and iron-sulfur (Fe-S) centers, to quinones in the respiratory and/or the photosynthetic chain. The immediate electron acceptor for the enzyme in this species is believed to be plastoquinone. Couples the redox reaction to proton translocation, and thus conserves the redox energy in a proton gradient. Cyanobacterial NDH-1 also plays a role in inorganic carbon-concentration. The sequence is that of NAD(P)H-quinone oxidoreductase subunit N from Prochlorococcus marinus (strain MIT 9303).